Consider the following 222-residue polypeptide: Vacuolar protein sorting-associated protein 2 homolog 2 (222 aa).

2 coiled-coil regions span residues 26-83 and 143-222; these read RGIE…AQIR and SEAI…LRRI. The disordered stretch occupies residues 179 to 222; that stretch reads SSAPKGRIATKTAAPPASTAATNKNSESSEVDELEKRLASLRRI. The segment covering 187 to 203 has biased composition (low complexity); it reads ATKTAAPPASTAATNKN.

The protein belongs to the SNF7 family. Component of the endosomal sorting required for transport complex III (ESCRT-III), composed at least of VPS2, VPS20, VPS24 and VPS32. Interacts with CHMP1A, CHMP1B and VPS60-1.

Its subcellular location is the endosome. In terms of biological role, component of the ESCRT-III complex, which is required for multivesicular bodies (MVBs) formation and sorting of endosomal cargo proteins into MVBs. The ESCRT-III complex is probably involved in the concentration of MVB cargo. The polypeptide is Vacuolar protein sorting-associated protein 2 homolog 2 (VPS2.2) (Arabidopsis thaliana (Mouse-ear cress)).